The primary structure comprises 94 residues: Small ribosomal subunit protein bS20 (94 aa).

It belongs to the bacterial ribosomal protein bS20 family.

In terms of biological role, binds directly to 16S ribosomal RNA. This Aquifex aeolicus (strain VF5) protein is Small ribosomal subunit protein bS20.